A 162-amino-acid polypeptide reads, in one-letter code: MSEQAPAPKRGRRFKEQTPVQRALGLLVRREHSKKELNRKLQARGIEPEAAQAAVERLAGEGWQDDVRFAASVVRNRASSGYGPLHIRAELGTHGLDSDAVSAAMATFEGDWTENALDLIRRRFGEDGPVDLAQRRKAADLLARRGFDGNSIRLATRFDLED.

This sequence belongs to the RecX family.

It is found in the cytoplasm. In terms of biological role, modulates RecA activity. This Xanthomonas campestris pv. campestris (strain 8004) protein is Regulatory protein RecX.